We begin with the raw amino-acid sequence, 73 residues long: Crustacean hyperglycemic hormone (73 aa).

Cystine bridges form between cysteine 7–cysteine 43, cysteine 23–cysteine 39, and cysteine 26–cysteine 52. Residue valine 73 is modified to Valine amide.

This sequence belongs to the arthropod CHH/MIH/GIH/VIH hormone family. In terms of tissue distribution, produced by the medulla terminalis X-organ in the eyestalks and transported to the sinus gland where they are stored and released.

Its subcellular location is the secreted. Functionally, hormone found in the sinus gland of isopods and decapods which controls the blood sugar level. Has a secretagogue action over the amylase released from the midgut gland. May act as a stress hormone and may be involved in the control of molting and reproduction. This Jasus lalandii (Cape rock lobster) protein is Crustacean hyperglycemic hormone.